The sequence spans 127 residues: Aspartate 1-decarboxylase (127 aa).

Serine 25 serves as the catalytic Schiff-base intermediate with substrate; via pyruvic acid. Serine 25 is modified (pyruvic acid (Ser)). Residue threonine 57 coordinates substrate. The active-site Proton donor is the tyrosine 58. 73 to 75 (GAA) contacts substrate.

This sequence belongs to the PanD family. As to quaternary structure, heterooctamer of four alpha and four beta subunits. Pyruvate serves as cofactor. Post-translationally, is synthesized initially as an inactive proenzyme, which is activated by self-cleavage at a specific serine bond to produce a beta-subunit with a hydroxyl group at its C-terminus and an alpha-subunit with a pyruvoyl group at its N-terminus.

Its subcellular location is the cytoplasm. The enzyme catalyses L-aspartate + H(+) = beta-alanine + CO2. Its pathway is cofactor biosynthesis; (R)-pantothenate biosynthesis; beta-alanine from L-aspartate: step 1/1. Its function is as follows. Catalyzes the pyruvoyl-dependent decarboxylation of aspartate to produce beta-alanine. This chain is Aspartate 1-decarboxylase, found in Listeria innocua serovar 6a (strain ATCC BAA-680 / CLIP 11262).